A 188-amino-acid chain; its full sequence is Adenine phosphoribosyltransferase (188 aa).

The protein belongs to the purine/pyrimidine phosphoribosyltransferase family. As to quaternary structure, homodimer.

Its subcellular location is the cytoplasm. The catalysed reaction is AMP + diphosphate = 5-phospho-alpha-D-ribose 1-diphosphate + adenine. The protein operates within purine metabolism; AMP biosynthesis via salvage pathway; AMP from adenine: step 1/1. Catalyzes a salvage reaction resulting in the formation of AMP, that is energically less costly than de novo synthesis. This chain is Adenine phosphoribosyltransferase, found in Burkholderia multivorans (strain ATCC 17616 / 249).